Here is a 184-residue protein sequence, read N- to C-terminus: Protein FAM89A (184 aa).

A disordered region spans residues 148-184 (YFQEQNSLHDRRDRGPPRDLSLPVSSLSSSDWILESI). Positions 154-164 (SLHDRRDRGPP) are enriched in basic and acidic residues. Residues 167 to 184 (LSLPVSSLSSSDWILESI) show a composition bias toward low complexity.

Belongs to the FAM89 family.

This chain is Protein FAM89A (FAM89A), found in Homo sapiens (Human).